We begin with the raw amino-acid sequence, 528 residues long: Oxamate amidohydrolase proenzyme (528 aa).

The active-site Nucleophile is the threonine 342. Substrate is bound at residue 424–425 (GG).

The protein belongs to the gamma-glutamyltransferase family. Heterodimer that consists of a 35.5 kDa large (alpha) subunit and a 20 kDa small (beta) subunit, which are synthesized from a single polypeptide. Cleaved by autocatalysis into a large (alpha) and a small (beta) subunit.

The catalysed reaction is oxamate + H2O = oxalate + NH4(+). Involved in the uric acid degradation pathway. Catalyzes the conversion of oxamate to oxalate. This is Oxamate amidohydrolase proenzyme from Klebsiella pneumoniae subsp. pneumoniae (strain ATCC 700721 / MGH 78578).